Reading from the N-terminus, the 129-residue chain is Succinate dehydrogenase subunit 3-1, mitochondrial (129 aa).

The N-terminal 58 residues, 1-58 (MEKYHSNSRFAPFRDAPFALRGALGSSGSSFSSIDSLRRSSTLEQARGYTSRPLGAVR), are a transit peptide targeting the mitochondrion. A compositionally biased stretch (low complexity) spans 25–35 (GSSGSSFSSID). Positions 25-80 (GSSGSSFSSIDSLRRSSTLEQARGYTSRPLGAVRPKMLPSGCRPLHTSHPLSAPVA) are disordered. Heme is bound at residue His87. The helical transmembrane segment at 105–127 (IFGAALGAAIISIPLATKFSLMF) threads the bilayer.

In terms of assembly, component of complex II composed of eight subunits in plants: four classical SDH subunits SDH1, SDH2, SDH3 and SDH4 (a flavoprotein (FP), an iron-sulfur protein (IP), and a cytochrome b composed of a large and a small subunit.), as well as four subunits unknown in mitochondria from bacteria and heterotrophic eukaryotes. The cofactor is heme.

The protein localises to the mitochondrion inner membrane. Its pathway is carbohydrate metabolism; tricarboxylic acid cycle. Membrane-anchoring subunit of succinate dehydrogenase (SDH). This is Succinate dehydrogenase subunit 3-1, mitochondrial from Oryza sativa subsp. japonica (Rice).